The primary structure comprises 311 residues: Acetaldehyde dehydrogenase 1 (311 aa).

11–14 (SGNI) is an NAD(+) binding site. Cys-129 (acyl-thioester intermediate) is an active-site residue. NAD(+) is bound by residues 161–169 (SAGPGTRAN) and Asn-288.

The protein belongs to the acetaldehyde dehydrogenase family.

It catalyses the reaction acetaldehyde + NAD(+) + CoA = acetyl-CoA + NADH + H(+). The polypeptide is Acetaldehyde dehydrogenase 1 (Novosphingobium aromaticivorans (strain ATCC 700278 / DSM 12444 / CCUG 56034 / CIP 105152 / NBRC 16084 / F199)).